We begin with the raw amino-acid sequence, 2789 residues long: Multiple epidermal growth factor-like domains protein 8 (2789 aa).

An N-terminal signal peptide occupies residues 1-27; the sequence is MALGGALALALALALAVLGPLSLRVLA. At 28–2591 the chain is on the extracellular side; sequence GDCKGQRQVL…FFRQDQAHID (2564 aa). 6 disulfide bridges follow: Cys30-Cys57, Cys142-Cys152, Cys146-Cys158, Cys174-Cys184, Cys178-Cys191, and Cys193-Cys202. Residues 30–140 form the CUB 1 domain; it reads CKGQRQVLRE…LGFNASFRFS (111 aa). N-linked (GlcNAc...) asparagine glycosylation is present at Asn50. 2 consecutive EGF-like domains span residues 138-168 and 170-203; these read RFSLCPGGCQNHGQCKSPGVCVCEPGWGGPD and GLQECSAYCGSHGTCASTLGPCRCEPGFLGRACD. Kelch repeat units lie at residues 241–287, 290–338, 346–399, 402–453, 459–511, and 525–575; these read LLAV…AVAW, LLVL…AGHA, WLYV…FHAP, TLLV…FHTA, YMVV…APPS, and VLLV…SRDP. 3 PSI domains span residues 561 to 613, 847 to 899, and 900 to 947; these read YCSM…SDCQ, ACTS…ALCP, and LCEE…EECP. The N-linked (GlcNAc...) asparagine glycan is linked to Asn1048. Residues 1074–1115 enclose the EGF-like 3; calcium-binding domain; it reads DVDECRLGLARCHPRATCLNTPLSYECHCQRGYQGDGITHCN. Intrachain disulfides connect Cys1078/Cys1091, Cys1085/Cys1100, Cys1102/Cys1114, Cys1163/Cys1171, Cys1165/Cys1179, Cys1182/Cys1191, Cys1194/Cys1208, Cys1211/Cys1224, Cys1213/Cys1231, Cys1233/Cys1242, Cys1245/Cys1259, Cys1263/Cys1302, Cys1336/Cys1367, Cys1407/Cys1421, Cys1415/Cys1433, and Cys1435/Cys1444. Laminin EGF-like domains lie at 1163–1210 and 1211–1261; these read CGCS…GCRP and CQCN…SCFR. Asn1226 is a glycosylation site (N-linked (GlcNAc...) asparagine). In terms of domain architecture, CUB 2 spans 1263–1405; it reads CGGRALLTNV…WGFNASVGSA (143 aa). An N-linked (GlcNAc...) asparagine glycan is attached at Asn1271. Thr1353 carries the post-translational modification Phosphothreonine. The 43-residue stretch at 1403 to 1445 folds into the EGF-like 4 domain; that stretch reads GSARCGSGGPGSCPVPQECVPQDGAAGAGLCRCPQGWAGPHCR. Kelch repeat units follow at residues 1522-1570, 1580-1629, 1632-1679, 1685-1735, 1740-1787, and 1796-1841; these read TLWM…SFHA, AMYL…TARR, SLLL…SAVY, SLYV…HASA, TMVV…ESVA, and RLYI…WCHG. PSI domains are found at residues 1820–1860, 1868–1923, 2004–2062, and 2064–2121; these read PCRL…PPCS, ECRR…NDCR, PCHL…ESCS, and GCAQ…LSCP. Asn2010 carries an N-linked (GlcNAc...) asparagine glycan. One can recognise an EGF-like 5 domain in the interval 2122-2160; the sequence is PEDECANGHHDCNETQNCHDQPHGYECSCKTGYTMDNVT. Cystine bridges form between Cys2126-Cys2139 and Cys2133-Cys2148. N-linked (GlcNAc...) asparagine glycosylation is found at Asn2158 and Asn2173. Cystine bridges form between Cys2197–Cys2205, Cys2199–Cys2214, Cys2217–Cys2226, Cys2229–Cys2243, Cys2324–Cys2333, Cys2326–Cys2341, Cys2343–Cys2368, and Cys2371–Cys2385. 2 consecutive Laminin EGF-like domains span residues 2197 to 2245 and 2324 to 2387; these read CRCN…TCRP and CQCN…QCYR. A disordered region spans residues 2468–2508; sequence VHIQPPPPPPPPPPPADGVPRVAADLGGLGTGSGSGSPVEP. Positions 2471 to 2484 are enriched in pro residues; it reads QPPPPPPPPPPPAD. The chain crosses the membrane as a helical span at residues 2592-2612; sequence LFVFFSVFFSCFFLFLSLCVL. The Cytoplasmic segment spans residues 2613 to 2789; that stretch reads LWKAKQALDQ…SQDNLTSMSL (177 aa). A compositionally biased stretch (gly residues) spans 2762–2776; it reads GGAGGSGHGGGGGRK. The segment at 2762 to 2789 is disordered; it reads GGAGGSGHGGGGGRKGLLSQDNLTSMSL. Polar residues predominate over residues 2780 to 2789; the sequence is SQDNLTSMSL.

In terms of tissue distribution, highest expression in brain, testis and kidney.

It localises to the membrane. Functionally, acts as a negative regulator of hedgehog signaling. The polypeptide is Multiple epidermal growth factor-like domains protein 8 (Megf8) (Mus musculus (Mouse)).